Reading from the N-terminus, the 873-residue chain is Tyrosine-protein kinase transforming protein Fps (873 aa).

Residues 1-46 are disordered; sequence ASGQLHRPQPQEHTSTSAAAGTWRLTQASESRHRLPHCSAAPSHQD. Residues 11–29 show a composition bias toward polar residues; sequence QEHTSTSAAAGTWRLTQAS. Positions 50 to 313 constitute an F-BAR domain; the sequence is MGFGPELWCP…AVEMIDPATE (264 aa). Residues 445–471 are disordered; the sequence is GSEEPPPALPLQEDRQSARSTDQERSG. Residues 456 to 469 are compositionally biased toward basic and acidic residues; that stretch reads QEDRQSARSTDQER. Positions 511–600 constitute an SH2 domain; that stretch reads WYHGAIPRSE…KSGIVLTRAV (90 aa). In terms of domain architecture, Protein kinase spans 612–865; sequence VLLGERIGRG…PSFGAVHQDL (254 aa). ATP contacts are provided by residues 618-626 and Lys-641; that span reads IGRGNFGEV. Asp-734 acts as the Proton acceptor in catalysis. Tyr-764 is subject to Phosphotyrosine; by autocatalysis.

The protein belongs to the protein kinase superfamily. Tyr protein kinase family. Fes/fps subfamily.

It catalyses the reaction L-tyrosyl-[protein] + ATP = O-phospho-L-tyrosyl-[protein] + ADP + H(+). The protein is Tyrosine-protein kinase transforming protein Fps (V-FPS) of Gallus gallus (Chicken).